We begin with the raw amino-acid sequence, 145 residues long: uncharacterized protein (145 aa).

A disordered region spans residues 71-95; it reads GARGRGRTYTKGGSSRSPASWAEQG.

This is an uncharacterized protein from Homo sapiens (Human).